We begin with the raw amino-acid sequence, 550 residues long: Sterol O-acyltransferase 1 (550 aa).

Position 1 is an N-acetylmethionine (M1). The segment at 1-36 is disordered; that stretch reads MVGEEKMSLRNRLSKSRENPEEDEDQRKPAKESLEA. The Cytoplasmic segment spans residues 1 to 138; it reads MVGEEKMSLR…LDELLEVDHI (138 aa). S8 carries the post-translational modification Phosphoserine. Residues 15 to 34 are compositionally biased toward basic and acidic residues; the sequence is KSRENPEEDEDQRKPAKESL. H137 is a cholesterol binding site. The helical transmembrane segment at 139-160 threads the bilayer; that stretch reads RTIYHMFIALLILFILSTLVVD. Residues 161-180 lie on the Lumenal side of the membrane; that stretch reads YIDEGRLVLEFSLLSYAFGK. A helical transmembrane segment spans residues 181-206; the sequence is FPTVVWTWWIMFLSTFSVPYFLFQRW. At 207-218 the chain is on the cytoplasmic side; that stretch reads ATGYSKSSHPLI. A helical membrane pass occupies residues 219–244; that stretch reads NSLFHGFLFMVFQIGILGFGPTYVVL. Residues 245-252 are Lumenal-facing; sequence AYTLPPAS. Residues 253-276 form a helical membrane-spanning segment; the sequence is RFIIIFEQIRFVMKAHSFVRENVP. Residues 277–319 are Cytoplasmic-facing; that stretch reads RVLNSAKEKSSTVPIPTVNQYLYFLFAPTLIYRDSYPRNPTVR. Residues 320 to 352 form a helical membrane-spanning segment; it reads WGYVAMQFAQVFGCFFYVYYIFERLCAPLFRNI. Over 353–369 the chain is Lumenal; the sequence is KQEPFSARVLVLCVFNS. Residues 370–395 form a helical membrane-spanning segment; the sequence is ILPGVLILFLTFFAFLHCWLNAFAEM. The Cytoplasmic portion of the chain corresponds to 396-443; sequence LRFGDRMFYKDWWNSTSYSNYYRTWNVVVHDWLYYYAYKDFLWFFSKR. The short motif at 403–409 is the FYXDWWN motif element; it reads FYKDWWN. Positions 415, 418, 421, 425, 433, 445, and 456 each coordinate an acyl-CoA. Residues 444–468 form a helical membrane-spanning segment; the sequence is FKSAAMLAVFAVSAVVHEYALAVCL. Residue H460 is part of the active site. Over 469–474 the chain is Lumenal; that stretch reads SFFYPV. Residues 475 to 490 traverse the membrane as a helical segment; that stretch reads LFVLFMFFGMAFNFIV. At 491–496 the chain is on the cytoplasmic side; sequence NDSRKK. Residues 497–528 traverse the membrane as a helical segment; the sequence is PIWNVMMWTSLFLGNGVLLCFYSQEWYARQHC. C528 and C546 are joined by a disulfide. The Lumenal portion of the chain corresponds to 529–550; the sequence is PLKNPTFLDYVRPRSWTCRYVF.

The protein belongs to the membrane-bound acyltransferase family. Sterol o-acyltransferase subfamily. May form homo- or heterodimers. Interacts with UBIAD1. Expressed in most tissues, but most strongly in the adrenal gland. Expressed more strongly in liver Kupffer cells than in hepatocytes.

The protein localises to the endoplasmic reticulum membrane. It carries out the reaction a sterol + a long-chain fatty acyl-CoA = a long-chain 3-hydroxysterol ester + CoA. The catalysed reaction is cholesterol + an acyl-CoA = a cholesterol ester + CoA. It catalyses the reaction cholesterol + (9Z)-octadecenoyl-CoA = cholesteryl (9Z-octadecenoate) + CoA. The enzyme catalyses cholesterol + hexadecanoyl-CoA = cholesteryl hexadecanoate + CoA. It carries out the reaction octadecanoyl-CoA + cholesterol = cholesteryl octadecanoate + CoA. The catalysed reaction is (9Z,12Z)-octadecadienoyl-CoA + cholesterol = cholesteryl (9Z,12Z)-octadecadienoate + CoA. It catalyses the reaction (5Z,8Z,11Z,14Z)-eicosatetraenoyl-CoA + cholesterol = cholesteryl (5Z,8Z,11Z,14Z)-eicosatetraenoate + CoA. The enzyme catalyses (9Z)-hexadecenoyl-CoA + cholesterol = cholesteryl (9Z)-hexadecenoate + CoA. It carries out the reaction (11Z)-octadecenoyl-CoA + cholesterol = cholesteryl (11Z)-octadecenoate + CoA. The catalysed reaction is (7Z)-octadecenoyl-CoA + cholesterol = cholesteryl (7Z)-octadecenoate + CoA. Catalyzes the formation of fatty acid-cholesterol esters, which are less soluble in membranes than cholesterol. Plays a role in lipoprotein assembly and dietary cholesterol absorption. Preferentially utilizes oleoyl-CoA ((9Z)-octadecenoyl-CoA) as a substrate: shows a higher activity towards an acyl-CoA substrate with a double bond at the delta-9 position (9Z) than towards saturated acyl-CoA or an unsaturated acyl-CoA with a double bond at the delta-7 (7Z) or delta-11 (11Z) positions. This Chlorocebus aethiops (Green monkey) protein is Sterol O-acyltransferase 1 (SOAT1).